Here is a 382-residue protein sequence, read N- to C-terminus: Protein phosphatase 1A (382 aa).

Gly-2 carries N-myristoyl glycine lipidation. In terms of domain architecture, PPM-type phosphatase spans 23-291 (RYGLSSMQGW…DNMSVILICF (269 aa)). The Mn(2+) site is built by Asp-60, Gly-61, Asp-239, and Asp-282. Ser-375 and Ser-377 each carry phosphoserine.

It belongs to the PP2C family. Monomer. Interacts with SMAD2; the interaction dephosphorylates SMAD2 in its C-terminal SXS motif resulting in disruption of the SMAD2/SMAD4 complex, SMAD2 nuclear export and termination of the TGF-beta-mediated signaling. Interacts with SMAD2; the interaction dephosphorylates SMAD2 in its C-terminal SXS motif resulting in disruption of the SMAD2/SMAD4 complex, SMAD2 nuclear export and termination of the TGF-beta-mediated signaling. Interacts with the phosphorylated form of IKBKB/IKKB. Mg(2+) serves as cofactor. It depends on Mn(2+) as a cofactor. Post-translationally, N-myristoylation is essential for the recognition of its substrates for dephosphorylation.

It localises to the nucleus. The protein localises to the cytoplasm. It is found in the cytosol. The protein resides in the membrane. The enzyme catalyses O-phospho-L-seryl-[protein] + H2O = L-seryl-[protein] + phosphate. It catalyses the reaction O-phospho-L-threonyl-[protein] + H2O = L-threonyl-[protein] + phosphate. In terms of biological role, enzyme with a broad specificity. Negatively regulates TGF-beta signaling through dephosphorylating SMAD2 and SMAD3, resulting in their dissociation from SMAD4, nuclear export of the SMADs and termination of the TGF-beta-mediated signaling. Dephosphorylates PRKAA1 and PRKAA2. Plays an important role in the termination of TNF-alpha-mediated NF-kappa-B activation through dephosphorylating and inactivating IKBKB/IKKB. This is Protein phosphatase 1A (Ppm1a) from Mus musculus (Mouse).